Consider the following 211-residue polypeptide: SOSS complex subunit B1 (211 aa).

Residues 22–92 (IVLETGRVTK…TLYTGRGGDL (71 aa)) constitute a DNA-binding region (OB). The tract at residues 110–211 (EPNPEYSAQQ…GKETRRSSKR (102 aa)) is disordered. Residues 115 to 128 (YSAQQAPNKTVQND) are compositionally biased toward polar residues. Pro residues-rich tracts occupy residues 133-143 (APQPPTGPPAT) and 165-174 (PHPPHTPSHP).

Belongs to the SOSS-B family. SOSS-B1 subfamily. Component of the SOSS complex, composed of SOSS-B (SOSS-B1/NABP2 or SOSS-B2/NABP1), SOSS-A/INTS3 and SOSS-C/INIP. SOSS complexes containing SOSS-B1/NABP2 are more abundant than complexes containing SOSS-B2/NABP1. Directly interacts with ATM, SOSS-A/INTS3 and RAD51. Interacts with INTS7. Phosphorylated by ATM in response to DNA damage. Phosphorylation prevents degradation by the proteasome, hence stabilization of the protein and accumulation within cells. Post-translationally, ubiquitinated in a FBXL5-dependent manner, leading to proteasomal degradation.

The protein localises to the nucleus. Component of the SOSS complex, a multiprotein complex that functions downstream of the MRN complex to promote DNA repair and G2/M checkpoint. In the SOSS complex, acts as a sensor of single-stranded DNA that binds to single-stranded DNA, in particular to polypyrimidines. The SOSS complex associates with DNA lesions and influences diverse endpoints in the cellular DNA damage response including cell-cycle checkpoint activation, recombinational repair and maintenance of genomic stability. Required for efficient homologous recombination-dependent repair of double-strand breaks (DSBs) and ATM-dependent signaling pathways. This Bos taurus (Bovine) protein is SOSS complex subunit B1 (NABP2).